Reading from the N-terminus, the 1015-residue chain is Fibronectin-binding protein A (1015 aa).

An N-terminal signal peptide occupies residues 1–36; it reads MKNNLRYGIRKHKLGAASVFLGTMIVVGMGQDKEAA. Residues 7-18 carry the YSIRK-G/S signaling motif motif; that stretch reads YGIRKHKLGAAS. Positions 37 to 512 are ligand-binding A region; it reads ASEQKTTTVE…SNKADGNGKN (476 aa). The span at 75-92 shows a compositional bias: polar residues; that stretch reads SYSATATEQPSNATQVTT. The disordered stretch occupies residues 75 to 199; it reads SYSATATEQP…KVETGTDVTS (125 aa). Residues 112–126 show a composition bias toward basic and acidic residues; it reads TVKEEVVKEEAKPQV. Residues 129–139 show a composition bias toward polar residues; that stretch reads TTQSQDNSGDQ. Residues 179-193 are compositionally biased toward basic and acidic residues; it reads DVVEAKEASDEKVET. A fibrinogen/elastin/tropoelastin-binding region spans residues 194 to 512; sequence GTDVTSKVTV…SNKADGNGKN (319 aa). The tract at residues 513-873 is fibronectin-binding; it reads GQIIQNNDFE…EGQQTIEEDT (361 aa). Residues 546–575 form a B-1 repeat; the sequence is ENQDNTPLDIDYHTAIDGEGGYVDGYIETI. The 2 X approximate tandem repeats stretch occupies residues 546 to 605; the sequence is ENQDNTPLDIDYHTAIDGEGGYVDGYIETIEETDSSAIDIDYHTAVDSEAGHVGGYTESS. The stretch at 576 to 605 is one B-2 repeat; the sequence is EETDSSAIDIDYHTAVDSEAGHVGGYTESS. 4 disordered regions span residues 596 to 623, 741 to 815, 828 to 953, and 966 to 992; these read GHVGGYTESSEESNPIDFEESTHENSKH, LGYE…IDFD, EIIE…GKVV, and VAPTKKAQSKKSELPETGGEESTNKGM. The D-1 repeat unit spans residues 746 to 783; the sequence is GQNSGNQSFEEDTEEDKPKYEQGGNIVDIDFDSVPQIQ. A 4 X approximate tandem repeats region spans residues 746-875; sequence GQNSGNQSFE…QQTIEEDTTP (130 aa). Residues 780-791 show a composition bias toward polar residues; that stretch reads PQIQGQNNGNQS. The stretch at 784 to 821 is one D-2 repeat; that stretch reads GQNNGNQSFEEDTEKDKPKYEQGGNIIDIDFDSVPQIH. The stretch at 822 to 860 is one D-3 repeat; it reads GFNKHTEIIEEDTNKDKPNYQFGGHNSVDFEEDTLPKVS. The span at 828–839 shows a compositional bias: basic and acidic residues; sequence EIIEEDTNKDKP. One copy of the D-4; truncated repeat lies at 861 to 875; the sequence is GQNEGQQTIEEDTTP. Residues 875-935 are compositionally biased toward pro residues; sequence PPTPPTPEVP…PAEPGKPVPP (61 aa). 5 WR repeats span residues 876 to 889, 890 to 903, 904 to 917, 918 to 931, and 932 to 945; these read PTPPTPEVPSEPET, PTPPTPEVPAEPGK, and PVPPAKEEPKKPSK. The 5 X tandem repeats, Pro-rich (WR) stretch occupies residues 876–945; the sequence is PTPPTPEVPS…AKEEPKKPSK (70 aa). The LPXTG sorting signal signature appears at 979–983; it reads LPETG. Residue threonine 982 is modified to Pentaglycyl murein peptidoglycan amidated threonine. Positions 983–1015 are cleaved as a propeptide — removed by sortase; the sequence is GGEESTNKGMLFGGLFSILGLALLRRNKKNNKA.

It is found in the secreted. The protein localises to the cell wall. Functionally, promotes bacterial attachment to multiple substrates, such as fibronectin (Fn), fibrinogen (Fg), elastin peptides and tropoelastin. This confers to S.aureus the ability to invade endothelial cells. Promotes adherence to and aggregation of activated platelets. This chain is Fibronectin-binding protein A (fnbA), found in Staphylococcus aureus (strain MSSA476).